A 166-amino-acid polypeptide reads, in one-letter code: Thioredoxin, mitochondrial (166 aa).

A mitochondrion-targeting transit peptide spans 1–59 (MAQRLLLRRFLTSVISRKPPQGVWASLTSTSLQTPPYNAGGLTGTPSPARTFHTTRVCS). Residues 61 to 166 (TFNVQDGPDF…LEAFLKKLIG (106 aa)) form the Thioredoxin domain. Catalysis depends on nucleophile residues Cys90 and Cys93. Cys90 and Cys93 form a disulfide bridge. Position 152 is an N6-acetyllysine; alternate (Lys152). An N6-succinyllysine; alternate modification is found at Lys152.

This sequence belongs to the thioredoxin family. As to quaternary structure, monomer. Expressed in several tissues with the highest expression levels in heart, muscle, kidney and adrenal gland.

The protein localises to the mitochondrion. Important for the control of mitochondrial reactive oxygen species homeostasis, apoptosis regulation and cell viability. Is involved in various redox reactions including the reduction of protein disulfide bonds, through the reversible oxidation of its active center dithiol to a disulfide. The polypeptide is Thioredoxin, mitochondrial (Txn2) (Rattus norvegicus (Rat)).